Consider the following 61-residue polypeptide: Small ribosomal subunit protein uS14B (61 aa).

Residues Cys24, Cys27, Cys40, and Cys43 each contribute to the Zn(2+) site.

Belongs to the universal ribosomal protein uS14 family. Zinc-binding uS14 subfamily. In terms of assembly, part of the 30S ribosomal subunit. Contacts proteins S3 and S10. Zn(2+) is required as a cofactor.

In terms of biological role, binds 16S rRNA, required for the assembly of 30S particles and may also be responsible for determining the conformation of the 16S rRNA at the A site. This chain is Small ribosomal subunit protein uS14B, found in Mycobacterium ulcerans (strain Agy99).